The chain runs to 89 residues: Small ribosomal subunit protein uS15 (89 aa).

This sequence belongs to the universal ribosomal protein uS15 family. In terms of assembly, part of the 30S ribosomal subunit. Forms a bridge to the 50S subunit in the 70S ribosome, contacting the 23S rRNA.

Its function is as follows. One of the primary rRNA binding proteins, it binds directly to 16S rRNA where it helps nucleate assembly of the platform of the 30S subunit by binding and bridging several RNA helices of the 16S rRNA. Forms an intersubunit bridge (bridge B4) with the 23S rRNA of the 50S subunit in the ribosome. The sequence is that of Small ribosomal subunit protein uS15 from Treponema denticola (strain ATCC 35405 / DSM 14222 / CIP 103919 / JCM 8153 / KCTC 15104).